Reading from the N-terminus, the 254-residue chain is 3-deoxy-manno-octulosonate cytidylyltransferase (254 aa).

Belongs to the KdsB family.

The protein localises to the cytoplasm. The catalysed reaction is 3-deoxy-alpha-D-manno-oct-2-ulosonate + CTP = CMP-3-deoxy-beta-D-manno-octulosonate + diphosphate. It participates in nucleotide-sugar biosynthesis; CMP-3-deoxy-D-manno-octulosonate biosynthesis; CMP-3-deoxy-D-manno-octulosonate from 3-deoxy-D-manno-octulosonate and CTP: step 1/1. It functions in the pathway bacterial outer membrane biogenesis; lipopolysaccharide biosynthesis. Functionally, activates KDO (a required 8-carbon sugar) for incorporation into bacterial lipopolysaccharide in Gram-negative bacteria. In Chlamydia trachomatis serovar L2 (strain ATCC VR-902B / DSM 19102 / 434/Bu), this protein is 3-deoxy-manno-octulosonate cytidylyltransferase.